Here is a 275-residue protein sequence, read N- to C-terminus: Trypsin-4 (275 aa).

The first 18 residues, 1-18, serve as a signal peptide directing secretion; that stretch reads MSNKITILLAVLLAVVAC. Positions 19–48 are cleaved as a propeptide — activation peptide; sequence AQAHASHQRRVPYPLPRFLPRPHHTVSNHR. One can recognise a Peptidase S1 domain in the interval 49 to 274; that stretch reads IVGGFEIDVA…VRDWIRETCG (226 aa). Cys-74 and Cys-90 are disulfide-bonded. Active-site charge relay system residues include His-89 and Asp-134. Intrachain disulfides connect Cys-199/Cys-215 and Cys-226/Cys-250. Ser-230 acts as the Charge relay system in catalysis.

It belongs to the peptidase S1 family. In terms of tissue distribution, expressed in the midgut. Expression levels drop a few hours after blood feeding and pick up again 28 hours later.

The protein resides in the secreted. The enzyme catalyses Preferential cleavage: Arg-|-Xaa, Lys-|-Xaa.. Constitutive trypsin that is expressed 2 days after emergence, coinciding with host seeking behavior of the female. The chain is Trypsin-4 (TRYP4) from Anopheles gambiae (African malaria mosquito).